The chain runs to 194 residues: A-type ATP synthase subunit E (194 aa).

Belongs to the V-ATPase E subunit family. In terms of assembly, has multiple subunits with at least A(3), B(3), C, D, E, F, H, I and proteolipid K(x).

The protein resides in the cell membrane. In terms of biological role, component of the A-type ATP synthase that produces ATP from ADP in the presence of a proton gradient across the membrane. In Haloferax volcanii (strain ATCC 29605 / DSM 3757 / JCM 8879 / NBRC 14742 / NCIMB 2012 / VKM B-1768 / DS2) (Halobacterium volcanii), this protein is A-type ATP synthase subunit E.